Reading from the N-terminus, the 187-residue chain is Cytochrome c oxidase assembly protein CtaG (187 aa).

At 1-9 (MSKKSNKNL) the chain is on the cytoplasmic side. The helical; Signal-anchor for type II membrane protein transmembrane segment at 10-30 (AFSLLGLIISMVLLSFASVPI) threads the bilayer. Over 31–187 (YNLFCKVTGY…IASLRGNTKY (157 aa)) the chain is Periplasmic.

Belongs to the COX11/CtaG family.

The protein localises to the cell inner membrane. In terms of biological role, exerts its effect at some terminal stage of cytochrome c oxidase synthesis, probably by being involved in the insertion of the copper B into subunit I. This is Cytochrome c oxidase assembly protein CtaG from Rickettsia felis (strain ATCC VR-1525 / URRWXCal2) (Rickettsia azadi).